We begin with the raw amino-acid sequence, 193 residues long: Xanthine phosphoribosyltransferase (193 aa).

2 residues coordinate xanthine: leucine 20 and threonine 27. 128–132 (ANGQA) serves as a coordination point for 5-phospho-alpha-D-ribose 1-diphosphate. Lysine 156 provides a ligand contact to xanthine.

Belongs to the purine/pyrimidine phosphoribosyltransferase family. Xpt subfamily. As to quaternary structure, homodimer.

The protein localises to the cytoplasm. The enzyme catalyses XMP + diphosphate = xanthine + 5-phospho-alpha-D-ribose 1-diphosphate. The protein operates within purine metabolism; XMP biosynthesis via salvage pathway; XMP from xanthine: step 1/1. Converts the preformed base xanthine, a product of nucleic acid breakdown, to xanthosine 5'-monophosphate (XMP), so it can be reused for RNA or DNA synthesis. In Streptococcus equi subsp. equi (strain 4047), this protein is Xanthine phosphoribosyltransferase.